The primary structure comprises 349 residues: ATPase GET3 (349 aa).

Residue 26–33 participates in ATP binding; that stretch reads KGGVGKTT. Aspartate 57 is a catalytic residue. Residues glutamate 242 and asparagine 269 each coordinate ATP. The Zn(2+) site is built by cysteine 281 and cysteine 284.

This sequence belongs to the arsA ATPase family. In terms of assembly, homodimer. Component of the Golgi to ER traffic (GET) complex, which is composed of GET1, GET2 and GET3. Within the complex, GET1 and GET2 form a heterotetramer which is stabilized by phosphatidylinositol binding and which binds to the GET3 homodimer. Interacts with the chloride channel protein GEF1.

It is found in the cytoplasm. Its subcellular location is the endoplasmic reticulum. The protein resides in the golgi apparatus. Its function is as follows. ATPase required for the post-translational delivery of tail-anchored (TA) proteins to the endoplasmic reticulum. Recognizes and selectively binds the transmembrane domain of TA proteins in the cytosol. This complex then targets to the endoplasmic reticulum by membrane-bound receptors GET1 and GET2, where the tail-anchored protein is released for insertion. This process is regulated by ATP binding and hydrolysis. ATP binding drives the homodimer towards the closed dimer state, facilitating recognition of newly synthesized TA membrane proteins. ATP hydrolysis is required for insertion. Subsequently, the homodimer reverts towards the open dimer state, lowering its affinity for the GET1-GET2 receptor, and returning it to the cytosol to initiate a new round of targeting. Cooperates with the HDEL receptor ERD2 to mediate the ATP-dependent retrieval of resident ER proteins that contain a C-terminal H-D-E-L retention signal from the Golgi to the ER. Involved in low-level resistance to the oxyanions arsenite and arsenate, and in heat tolerance. This Lodderomyces elongisporus (strain ATCC 11503 / CBS 2605 / JCM 1781 / NBRC 1676 / NRRL YB-4239) (Yeast) protein is ATPase GET3.